The following is a 381-amino-acid chain: L-lactate dehydrogenase (381 aa).

The 380-residue stretch at 1–380 folds into the FMN hydroxy acid dehydrogenase domain; sequence MIISASTDYR…TRDSLVRELG (380 aa). Tyrosine 24 serves as a coordination point for substrate. 2 residues coordinate FMN: serine 106 and glutamine 127. Tyrosine 129 contributes to the substrate binding site. Threonine 155 is a binding site for FMN. Residue arginine 164 coordinates substrate. Lysine 251 is an FMN binding site. Histidine 275 acts as the Proton acceptor in catalysis. Residue arginine 278 participates in substrate binding. Residue 306 to 330 coordinates FMN; that stretch reads DSGIRSGLDVVRMIALGADTVLIGR.

It belongs to the FMN-dependent alpha-hydroxy acid dehydrogenase family. Homotetramer. The cofactor is FMN.

It is found in the cell inner membrane. It catalyses the reaction (S)-lactate + A = pyruvate + AH2. In terms of biological role, catalyzes the conversion of L-lactate to pyruvate. Is coupled to the respiratory chain. This is L-lactate dehydrogenase from Pseudomonas entomophila (strain L48).